We begin with the raw amino-acid sequence, 448 residues long: Divalent metal cation transporter MntH (448 aa).

Residues 1–10 (MKKDKTERTK) are compositionally biased toward basic and acidic residues. The tract at residues 1 to 20 (MKKDKTERTKQSWRKAQNAP) is disordered. 11 consecutive transmembrane segments (helical) span residues 41–61 (LFAFMGPGALIAVGYVDPGNW), 69–89 (SEFGYTLLSVILISNILAVLL), 117–137 (GFVLWILAELAIIATDIAEVI), 147–167 (FGIPLIWGVCITALDIFLVLF), 176–196 (IEVIVITLMVTILVCFGAEMV), 215–235 (IVTNPAMLYIALGILGATVMP), 270–290 (FSLTIALLINASILILAAAAF), 307–327 (LLNPTLGSSIASTVFAVALLA), 363–383 (VLAIVPAVIITALYGANGINE), 384–404 (LLIFSQVILSMQLSFAVIPLV), and 424–444 (IISWAVAIFIAVLNIYLLFYT).

It belongs to the NRAMP family.

It is found in the cell membrane. Its function is as follows. H(+)-stimulated, divalent metal cation uptake system. The chain is Divalent metal cation transporter MntH from Listeria monocytogenes serotype 4b (strain CLIP80459).